A 518-amino-acid chain; its full sequence is Membrane-bound lytic murein transglycosylase F (518 aa).

Positions 1–21 (MKKLKINYLFIGILALLLAVA) are cleaved as a signal peptide. A non-LT domain region spans residues 22 to 269 (LWPSIPWFGK…RIEEKYLGHG (248 aa)). The segment at 270–518 (DDFDYVDTRT…SRKGSEEKQN (249 aa)) is LT domain. Residue glutamate 314 is part of the active site.

This sequence in the N-terminal section; belongs to the bacterial solute-binding protein 3 family. In the C-terminal section; belongs to the transglycosylase Slt family.

It localises to the cell outer membrane. The enzyme catalyses Exolytic cleavage of the (1-&gt;4)-beta-glycosidic linkage between N-acetylmuramic acid (MurNAc) and N-acetylglucosamine (GlcNAc) residues in peptidoglycan, from either the reducing or the non-reducing ends of the peptidoglycan chains, with concomitant formation of a 1,6-anhydrobond in the MurNAc residue.. Murein-degrading enzyme that degrades murein glycan strands and insoluble, high-molecular weight murein sacculi, with the concomitant formation of a 1,6-anhydromuramoyl product. Lytic transglycosylases (LTs) play an integral role in the metabolism of the peptidoglycan (PG) sacculus. Their lytic action creates space within the PG sacculus to allow for its expansion as well as for the insertion of various structures such as secretion systems and flagella. In Escherichia coli (strain ATCC 8739 / DSM 1576 / NBRC 3972 / NCIMB 8545 / WDCM 00012 / Crooks), this protein is Membrane-bound lytic murein transglycosylase F.